Here is a 207-residue protein sequence, read N- to C-terminus: 2,3-bisphosphoglycerate-dependent phosphoglycerate mutase (207 aa).

Residues 10–17 (RHGQSEWN), 23–24 (TG), arginine 62, 89–92 (ERDY), lysine 100, 116–117 (RR), and 160–161 (GN) each bind substrate. The active-site Tele-phosphohistidine intermediate is histidine 11. Catalysis depends on glutamate 89, which acts as the Proton donor/acceptor.

The protein belongs to the phosphoglycerate mutase family. BPG-dependent PGAM subfamily. In terms of assembly, homodimer.

The catalysed reaction is (2R)-2-phosphoglycerate = (2R)-3-phosphoglycerate. The protein operates within carbohydrate degradation; glycolysis; pyruvate from D-glyceraldehyde 3-phosphate: step 3/5. Functionally, catalyzes the interconversion of 2-phosphoglycerate and 3-phosphoglycerate. The sequence is that of 2,3-bisphosphoglycerate-dependent phosphoglycerate mutase from Nitrobacter winogradskyi (strain ATCC 25391 / DSM 10237 / CIP 104748 / NCIMB 11846 / Nb-255).